A 136-amino-acid chain; its full sequence is MTRVKRGSVARKRRKNILKLASGFQGAHSTIFRTGNQQIIKALASSYRDRGKRKRDFRRLWITRINAAARNNGVSYTKFIRHLYKNQVSSNRKVLAQIAIFDTNSFSTILKKLSSGESIRYRNFSPEFYSGEVRTP.

The protein belongs to the bacterial ribosomal protein bL20 family.

The protein resides in the plastid. It localises to the chloroplast. Its function is as follows. Binds directly to 23S ribosomal RNA and is necessary for the in vitro assembly process of the 50S ribosomal subunit. It is not involved in the protein synthesizing functions of that subunit. The sequence is that of Large ribosomal subunit protein bL20c from Huperzia lucidula (Shining clubmoss).